The primary structure comprises 377 residues: Phospho-N-acetylmuramoyl-pentapeptide-transferase (377 aa).

Transmembrane regions (helical) follow at residues 9–29 (YITLRAVLACATALLIGLVAG), 59–79 (TPTMGGALILIAIAISTLLWA), 85–105 (FVWVVLLVTFGFGWIGWMDDY), 122–142 (FFWQATIGLVAAVYLAFAVSA), 155–175 (WVGSGFTMPLPTRADLIVPFF), 178–198 (VSYPLGVLGFVALTWAVIVGT), 210–230 (GLAIMPTVMVGSALGIFAYVV), 247–267 (AAELMVLCAAIGGAGLAFLWF), 274–294 (VFMGDVGALALGGALGTIAVI), 299–319 (IVLFIMGGVFVVETLSVMVQV), and 354–374 (QVVVRFWIITMMLVLVGLSTL).

This sequence belongs to the glycosyltransferase 4 family. MraY subfamily. Mg(2+) serves as cofactor.

The protein resides in the cell inner membrane. The enzyme catalyses UDP-N-acetyl-alpha-D-muramoyl-L-alanyl-gamma-D-glutamyl-meso-2,6-diaminopimeloyl-D-alanyl-D-alanine + di-trans,octa-cis-undecaprenyl phosphate = di-trans,octa-cis-undecaprenyl diphospho-N-acetyl-alpha-D-muramoyl-L-alanyl-D-glutamyl-meso-2,6-diaminopimeloyl-D-alanyl-D-alanine + UMP. Its pathway is cell wall biogenesis; peptidoglycan biosynthesis. Functionally, catalyzes the initial step of the lipid cycle reactions in the biosynthesis of the cell wall peptidoglycan: transfers peptidoglycan precursor phospho-MurNAc-pentapeptide from UDP-MurNAc-pentapeptide onto the lipid carrier undecaprenyl phosphate, yielding undecaprenyl-pyrophosphoryl-MurNAc-pentapeptide, known as lipid I. This Bordetella bronchiseptica (strain ATCC BAA-588 / NCTC 13252 / RB50) (Alcaligenes bronchisepticus) protein is Phospho-N-acetylmuramoyl-pentapeptide-transferase.